A 446-amino-acid polypeptide reads, in one-letter code: 3',5'-cyclic-AMP phosphodiesterase 7B (446 aa).

A PDEase domain is found at 97–420 (LDEDYLGQAR…AQWKSLLSNQ (324 aa)). H173 serves as the catalytic Proton donor. The a divalent metal cation site is built by H177, H213, D214, and D323. The disordered stretch occupies residues 422 to 446 (RRRGSGQDLAGPAPETLEQTEGATP). The residue at position 426 (S426) is a Phosphoserine. T445 carries the phosphothreonine modification.

This sequence belongs to the cyclic nucleotide phosphodiesterase family. PDE7 subfamily. A divalent metal cation serves as cofactor. In terms of tissue distribution, highly expressed in brain.

It carries out the reaction 3',5'-cyclic AMP + H2O = AMP + H(+). It participates in purine metabolism; 3',5'-cyclic AMP degradation; AMP from 3',5'-cyclic AMP: step 1/1. Inhibited by dipyridamole, IBMX and SCH 51866. Insensitive to zaprinast, rolipram, and milrinone. Hydrolyzes the second messenger cAMP, which is a key regulator of many important physiological processes. May be involved in the control of cAMP-mediated neural activity and cAMP metabolism in the brain. This is 3',5'-cyclic-AMP phosphodiesterase 7B from Mus musculus (Mouse).